Reading from the N-terminus, the 271-residue chain is MSRITERFTVLRGQGRKALVPYITAGDPQPQVTVPLMHAMVAAGADILELGVPFSDPMADGPVIQKACERALAAGTSLLDVLAMVAEFRRKDQETPVILMGYLNPIEILGYRSFAEQAAAHGVDGLLTVDMPPEEAEPLAAVCKEQGLDRIFLLAPTSSPKRIEQISALGSGFIYYVSLKGVTGASTLDVDDVSQRVAKIRHYTTMPVGVGFGIRDARSAAQIASIADAAVVGSALVKRIEQYQNRPEVIPEEVSALLRTMREAIDATENV.

Catalysis depends on proton acceptor residues Glu49 and Asp60.

This sequence belongs to the TrpA family. In terms of assembly, tetramer of two alpha and two beta chains.

It catalyses the reaction (1S,2R)-1-C-(indol-3-yl)glycerol 3-phosphate + L-serine = D-glyceraldehyde 3-phosphate + L-tryptophan + H2O. It functions in the pathway amino-acid biosynthesis; L-tryptophan biosynthesis; L-tryptophan from chorismate: step 5/5. Functionally, the alpha subunit is responsible for the aldol cleavage of indoleglycerol phosphate to indole and glyceraldehyde 3-phosphate. The sequence is that of Tryptophan synthase alpha chain from Nitrosococcus oceani (strain ATCC 19707 / BCRC 17464 / JCM 30415 / NCIMB 11848 / C-107).